The chain runs to 396 residues: Elongation factor Tu (396 aa).

The tr-type G domain maps to K10–E206. The G1 stretch occupies residues G19–T26. Position 19-26 (G19–T26) interacts with GTP. T26 contributes to the Mg(2+) binding site. The tract at residues G60–S64 is G2. The segment at D81–G84 is G3. Residues D81–H85 and N136–D139 contribute to the GTP site. The G4 stretch occupies residues N136–D139. Residues S174 to L176 form a G5 region.

This sequence belongs to the TRAFAC class translation factor GTPase superfamily. Classic translation factor GTPase family. EF-Tu/EF-1A subfamily. As to quaternary structure, monomer.

It localises to the cytoplasm. It carries out the reaction GTP + H2O = GDP + phosphate + H(+). In terms of biological role, GTP hydrolase that promotes the GTP-dependent binding of aminoacyl-tRNA to the A-site of ribosomes during protein biosynthesis. The sequence is that of Elongation factor Tu from Rhodopseudomonas palustris (strain HaA2).